A 107-amino-acid chain; its full sequence is CLAVATA3/ESR (CLE)-related protein 10 (107 aa).

The first 23 residues, 1–23 (MKTNRNRPINILIVFFLLTTARA), serve as a signal peptide directing secretion. 2 N-linked (GlcNAc...) asparagine glycosylation sites follow: N27 and N30. The disordered stretch occupies residues 73 to 107 (SRQPLFSPPPPPTEIDQRYGVEKRLVPSGPNPLHN). The segment covering 87–97 (IDQRYGVEKRL) has biased composition (basic and acidic residues). Hydroxyproline is present on residues P99 and P102. P102 carries an O-linked (Ara...) hydroxyproline glycan.

Belongs to the CLV3/ESR signal peptide family. In terms of processing, the O-glycosylation (arabinosylation) of the hydroxyproline Pro-102 enhances binding affinity of the CLE10p peptide for its receptor. As to expression, expressed in stems, apex, leaves, flowers, siliques and pollen.

The protein localises to the secreted. Its subcellular location is the extracellular space. In terms of biological role, extracellular signal peptide that regulates cell fate. Represses root apical meristem maintenance. Regulates the transition of protophloem cells from proliferation to differentiation, thus impinging on postembryonic growth capacity of the root meristem; this signaling pathway requires CRN and CLV2. The chain is CLAVATA3/ESR (CLE)-related protein 10 from Arabidopsis thaliana (Mouse-ear cress).